Consider the following 155-residue polypeptide: MAKGEGHILAQNKKARHDYHIVETVEAGIVLTGTEIKSVRAARIQLKDGFAQIKNGEAWLVNVHIAPFEQGNIWNADPERTRKLLLKKREITHLANELKGSGMTLVPLKVYLKDGFAKVLIGLAKGKHEYDKRETIKRRDQERDIKKQMKHYNAR.

Residues 135–147 show a composition bias toward basic and acidic residues; sequence TIKRRDQERDIKK. The interval 135–155 is disordered; sequence TIKRRDQERDIKKQMKHYNAR.

It belongs to the SmpB family.

The protein localises to the cytoplasm. In terms of biological role, required for rescue of stalled ribosomes mediated by trans-translation. Binds to transfer-messenger RNA (tmRNA), required for stable association of tmRNA with ribosomes. tmRNA and SmpB together mimic tRNA shape, replacing the anticodon stem-loop with SmpB. tmRNA is encoded by the ssrA gene; the 2 termini fold to resemble tRNA(Ala) and it encodes a 'tag peptide', a short internal open reading frame. During trans-translation Ala-aminoacylated tmRNA acts like a tRNA, entering the A-site of stalled ribosomes, displacing the stalled mRNA. The ribosome then switches to translate the ORF on the tmRNA; the nascent peptide is terminated with the 'tag peptide' encoded by the tmRNA and targeted for degradation. The ribosome is freed to recommence translation, which seems to be the essential function of trans-translation. This chain is SsrA-binding protein, found in Streptococcus pyogenes serotype M6 (strain ATCC BAA-946 / MGAS10394).